Consider the following 78-residue polypeptide: NAD(P)H-quinone oxidoreductase subunit O (78 aa).

It belongs to the complex I NdhO subunit family. In terms of assembly, NDH-1 can be composed of about 15 different subunits; different subcomplexes with different compositions have been identified which probably have different functions.

The protein resides in the cellular thylakoid membrane. The enzyme catalyses a plastoquinone + NADH + (n+1) H(+)(in) = a plastoquinol + NAD(+) + n H(+)(out). The catalysed reaction is a plastoquinone + NADPH + (n+1) H(+)(in) = a plastoquinol + NADP(+) + n H(+)(out). NDH-1 shuttles electrons from an unknown electron donor, via FMN and iron-sulfur (Fe-S) centers, to quinones in the respiratory and/or the photosynthetic chain. The immediate electron acceptor for the enzyme in this species is believed to be plastoquinone. Couples the redox reaction to proton translocation, and thus conserves the redox energy in a proton gradient. Cyanobacterial NDH-1 also plays a role in inorganic carbon-concentration. This is NAD(P)H-quinone oxidoreductase subunit O from Prochlorococcus marinus (strain MIT 9312).